A 141-amino-acid polypeptide reads, in one-letter code: Large ribosomal subunit protein uL16 (141 aa).

This sequence belongs to the universal ribosomal protein uL16 family. As to quaternary structure, part of the 50S ribosomal subunit. Contacts the CTC protein (RL25).

In terms of biological role, binds the 5S and 23S rRNAs and is also seen to make contacts with the A and P site tRNAs. Interacts with A site tRNA mimics, and is probably one of the key factors, along with a helix of the 23S rRNA, in positioning tRNA stems in the peptidyl-transferase center. This chain is Large ribosomal subunit protein uL16 (rplP), found in Deinococcus radiodurans (strain ATCC 13939 / DSM 20539 / JCM 16871 / CCUG 27074 / LMG 4051 / NBRC 15346 / NCIMB 9279 / VKM B-1422 / R1).